A 218-amino-acid chain; its full sequence is Adenylate kinase (218 aa).

10-15 (GAGKGT) lines the ATP pocket. The tract at residues 30-59 (STGDMLRAAVKAATPLGLAAKKIMDEGGLV) is NMP. AMP is bound by residues T31, R36, 57-59 (GLV), 85-88 (GFPR), and Q92. Residues 122–159 (GRRVHLASGRTYHVTFNPPAVPDKDDLTGEPLVQRNDD) are LID. ATP-binding positions include R123 and 132–133 (TY). 2 residues coordinate AMP: R156 and R167. Position 203 (G203) interacts with ATP.

This sequence belongs to the adenylate kinase family. As to quaternary structure, monomer.

The protein resides in the cytoplasm. The enzyme catalyses AMP + ATP = 2 ADP. Its pathway is purine metabolism; AMP biosynthesis via salvage pathway; AMP from ADP: step 1/1. In terms of biological role, catalyzes the reversible transfer of the terminal phosphate group between ATP and AMP. Plays an important role in cellular energy homeostasis and in adenine nucleotide metabolism. This chain is Adenylate kinase, found in Chlorobaculum tepidum (strain ATCC 49652 / DSM 12025 / NBRC 103806 / TLS) (Chlorobium tepidum).